The primary structure comprises 404 residues: Cytochrome b (404 aa).

Helical transmembrane passes span 35 to 55 (FGSL…FLAM), 79 to 101 (WLLR…LHFF), 116 to 136 (VWCL…IGYV), and 182 to 202 (FFSL…LHLA). Heme b-binding residues include H85 and H99. Positions 186 and 200 each coordinate heme b. H205 contributes to the a ubiquinone binding site. 4 helical membrane passes run 228–248 (IYVK…IFVF), 292–312 (LGGV…PFIN), 324–344 (IHQK…WIGC), and 351–370 (YVTI…AITP).

Belongs to the cytochrome b family. The main subunits of complex b-c1 are: cytochrome b, cytochrome c1 and the Rieske protein. Heme b serves as cofactor.

The protein localises to the mitochondrion inner membrane. In terms of biological role, component of the ubiquinol-cytochrome c reductase complex (complex III or cytochrome b-c1 complex) that is part of the mitochondrial respiratory chain. The b-c1 complex mediates electron transfer from ubiquinol to cytochrome c. Contributes to the generation of a proton gradient across the mitochondrial membrane that is then used for ATP synthesis. The sequence is that of Cytochrome b (MT-CYB) from Marchantia polymorpha (Common liverwort).